The chain runs to 215 residues: HTH-type transcriptional repressor FabR (215 aa).

The HTH tetR-type domain occupies 10-70; it reads KTRRSLVEAA…TMVDESGLML (61 aa). A DNA-binding region (H-T-H motif) is located at residues 33 to 52; that stretch reads SLREVAREAGIAPTSFYRHF.

Homodimer.

It localises to the cytoplasm. Its function is as follows. Represses the transcription of fabB, involved in unsaturated fatty acid (UFA) biosynthesis. By controlling UFA production, FabR directly influences the physical properties of the membrane bilayer. The polypeptide is HTH-type transcriptional repressor FabR (Shigella boydii serotype 18 (strain CDC 3083-94 / BS512)).